Here is a 473-residue protein sequence, read N- to C-terminus: 3-isopropylmalate dehydratase large subunit (473 aa).

[4Fe-4S] cluster is bound by residues Cys-348, Cys-413, and Cys-416.

Belongs to the aconitase/IPM isomerase family. LeuC type 1 subfamily. As to quaternary structure, heterodimer of LeuC and LeuD. It depends on [4Fe-4S] cluster as a cofactor.

It catalyses the reaction (2R,3S)-3-isopropylmalate = (2S)-2-isopropylmalate. Its pathway is amino-acid biosynthesis; L-leucine biosynthesis; L-leucine from 3-methyl-2-oxobutanoate: step 2/4. Its function is as follows. Catalyzes the isomerization between 2-isopropylmalate and 3-isopropylmalate, via the formation of 2-isopropylmaleate. The chain is 3-isopropylmalate dehydratase large subunit from Parvibaculum lavamentivorans (strain DS-1 / DSM 13023 / NCIMB 13966).